Here is a 358-residue protein sequence, read N- to C-terminus: Protein-glutamate methylesterase/protein-glutamine glutaminase 1 (358 aa).

The 118-residue stretch at 7–124 (SVLLVDDSAV…KNFLIDSAAE (118 aa)) folds into the Response regulatory domain. Aspartate 58 bears the 4-aspartylphosphate mark. Positions 170–358 (AQTTERIVAI…QEIHQAILHR (189 aa)) constitute a CheB-type methylesterase domain. Catalysis depends on residues serine 182, histidine 208, and aspartate 304.

This sequence belongs to the CheB family. Phosphorylated by CheA. Phosphorylation of the N-terminal regulatory domain activates the methylesterase activity.

It is found in the cytoplasm. The catalysed reaction is [protein]-L-glutamate 5-O-methyl ester + H2O = L-glutamyl-[protein] + methanol + H(+). It catalyses the reaction L-glutaminyl-[protein] + H2O = L-glutamyl-[protein] + NH4(+). Involved in chemotaxis. Part of a chemotaxis signal transduction system that modulates chemotaxis in response to various stimuli. Catalyzes the demethylation of specific methylglutamate residues introduced into the chemoreceptors (methyl-accepting chemotaxis proteins or MCP) by CheR. Also mediates the irreversible deamidation of specific glutamine residues to glutamic acid. This is Protein-glutamate methylesterase/protein-glutamine glutaminase 1 from Pseudomonas savastanoi pv. phaseolicola (strain 1448A / Race 6) (Pseudomonas syringae pv. phaseolicola (strain 1448A / Race 6)).